The following is a 276-amino-acid chain: Protein SCO1 homolog 2, mitochondrial (276 aa).

The N-terminal 14 residues, 1–14, are a transit peptide targeting the mitochondrion; it reads MLPCRRLVLSCKNQ. A helical transmembrane segment spans residues 66-82; the sequence is YAVPAILLGFAGFVGFL. A Thioredoxin domain is found at 110–273; it reads VKGPIIGGPF…SQELLKEVAS (164 aa).

The protein belongs to the SCO1/2 family. Expressed in the whole plant with highest expression in imbibed seeds and embryos, and the root hair zone.

The protein localises to the mitochondrion inner membrane. Thought to play a role in cellular copper homeostasis, mitochondrial redox signaling or insertion of copper into the active site of COX. Participates in copper and redox homeostasis. The chain is Protein SCO1 homolog 2, mitochondrial (HCC2) from Arabidopsis thaliana (Mouse-ear cress).